The sequence spans 242 residues: uncharacterized protein (242 aa).

The protein to E.coli MazG and to plasmid pIP1100 erythromycin esterase.

This is an uncharacterized protein from Streptomyces cacaoi.